The sequence spans 118 residues: Evasin P1080 (118 aa).

The signal sequence occupies residues 1 to 19 (FFQLAVFVVILFNINLLSA). 3 disulfide bridges follow: C41/C60, C45/C62, and C56/C73. N-linked (GlcNAc...) asparagine glycosylation occurs at N44. 2 N-linked (GlcNAc...) asparagine glycosylation sites follow: N67 and N104.

It localises to the secreted. In terms of biological role, salivary chemokine-binding protein which binds to host chemokines CXCL1, CXCL2, CXCL3, CXCL4, CXCL5, CXCL6, CXCL10, CXCL11 and CXCL13. The polypeptide is Evasin P1080 (Ixodes ricinus (Common tick)).